The chain runs to 830 residues: Periplasmic nitrate reductase (830 aa).

Positions 1–31 (MKLSRRDFMKANAAVAAAAAAGMTIPTVAKA) form a signal peptide, tat-type signal. The 4Fe-4S Mo/W bis-MGD-type domain maps to 39-95 (IKWDKAPCRFCGTGCGVLVGTQNGRIVASQGDPDSPVNRGLNCIKGYFLPKIMYGKD). [4Fe-4S] cluster-binding residues include C46, C49, C53, and C81. Mo-bis(molybdopterin guanine dinucleotide)-binding positions include K83, Q150, N175, C179, 212–219 (WGSNMAEM), 243–247 (STYEH), 262–264 (QTD), M372, Q376, N482, 508–509 (SD), K531, D558, and 718–727 (TGRVLEHWHT). Substrate is bound at residue F794. Mo-bis(molybdopterin guanine dinucleotide) contacts are provided by N802 and K819.

The protein belongs to the prokaryotic molybdopterin-containing oxidoreductase family. NasA/NapA/NarB subfamily. As to quaternary structure, component of the periplasmic nitrate reductase NapAB complex composed of NapA and NapB. The cofactor is [4Fe-4S] cluster. Requires Mo-bis(molybdopterin guanine dinucleotide) as cofactor. Post-translationally, predicted to be exported by the Tat system. The position of the signal peptide cleavage has not been experimentally proven.

The protein localises to the periplasm. It carries out the reaction 2 Fe(II)-[cytochrome] + nitrate + 2 H(+) = 2 Fe(III)-[cytochrome] + nitrite + H2O. In terms of biological role, catalytic subunit of the periplasmic nitrate reductase complex NapAB. Receives electrons from NapB and catalyzes the reduction of nitrate to nitrite. In Yersinia pseudotuberculosis serotype IB (strain PB1/+), this protein is Periplasmic nitrate reductase.